The primary structure comprises 321 residues: LIMR family protein SELMODRAFT_432210 (321 aa).

A run of 5 helical transmembrane segments spans residues 28 to 48 (KQLW…VIPF), 116 to 133 (CFSL…LDLW), 139 to 159 (LCVF…FGGV), 240 to 260 (LVFG…ILVF), and 284 to 304 (LLGT…VISG).

It belongs to the LIMR family.

The protein localises to the membrane. This is LIMR family protein SELMODRAFT_432210 from Selaginella moellendorffii (Spikemoss).